Consider the following 339-residue polypeptide: Serine racemase (339 aa).

Ser43 and Lys63 together coordinate ATP. The active-site Proton acceptor is Lys68. An N6-(pyridoxal phosphate)lysine modification is found at Lys68. Residue Thr90 participates in Ca(2+) binding. Catalysis depends on Ser93, which acts as the Proton acceptor. Asn95 is a pyridoxal 5'-phosphate binding site. Cys122 is modified (S-nitrosocysteine). Tyr130 provides a ligand contact to ATP. Asp187 lines the Mg(2+) pocket. Positions 195, 196, and 197 each coordinate pyridoxal 5'-phosphate. Ca(2+) contacts are provided by Glu219, Ala223, and Asp225. Glu219, Ala223, and Asp225 together coordinate Mg(2+). Mn(2+) is bound by residues Glu219, Ala223, and Asp225. ATP is bound at residue Lys287. Pyridoxal 5'-phosphate is bound at residue Ser323. An ATP-binding site is contributed by Asn326.

The protein belongs to the serine/threonine dehydratase family. It depends on Mg(2+) as a cofactor. Mn(2+) serves as cofactor. The cofactor is Ca(2+). Requires pyridoxal 5'-phosphate as cofactor.

The enzyme catalyses L-serine = D-serine. The catalysed reaction is L-serine = pyruvate + NH4(+). It catalyses the reaction D-serine = pyruvate + NH4(+). Catalyzes the synthesis of D-serine from L-serine. Has dehydratase activity towards both L-serine and D-serine. This Oryza sativa subsp. indica (Rice) protein is Serine racemase.